A 417-amino-acid chain; its full sequence is GPI mannosyltransferase 2 (417 aa).

The next 9 membrane-spanning stretches (helical) occupy residues 10–30 (FLII…LVWL), 104–124 (IVLK…WIVY), 142–162 (LALT…LISV), 167–187 (IAFT…SFDV), 206–226 (FCFA…LFYV), 239–259 (ITSI…FVYF), 312–332 (IPNF…ITYF), 344–364 (YIWI…VQII), and 394–414 (YYVM…ACFL).

This sequence belongs to the PIGV family.

The protein resides in the endoplasmic reticulum membrane. It participates in glycolipid biosynthesis; glycosylphosphatidylinositol-anchor biosynthesis. In terms of biological role, mannosyltransferase involved in glycosylphosphatidylinositol-anchor biosynthesis. Transfers the second mannose to the glycosylphosphatidylinositol during GPI precursor assembly. The chain is GPI mannosyltransferase 2 (GPI18) from Kluyveromyces lactis (strain ATCC 8585 / CBS 2359 / DSM 70799 / NBRC 1267 / NRRL Y-1140 / WM37) (Yeast).